We begin with the raw amino-acid sequence, 300 residues long: MKIGIIMGGISTEREVSLNSGREVIKYLELLEHEIIPIIIDKKEDVMEKAKGIDFAFLALHGEFGEDGTVQSVLQTLDIPYSGCGPLTSAICMDKDMTKKILKYANINTADWVNVSSVENIDYEAIEKIGYPVFVKPNSGGSSVATNLVKDKEGIKEAVELALKYDKEVMIENYTKGEEITCCMLNGKMLPVLAIRPHAEFFDYTAKYADGGSDEVVIELEENLHKKVEEMALACWKELKCEVYVRVDMIVKDGIPYVLELNTLPGMTKNSLFPKSANAVGISFAELLNSIVKYSLEVER.

The 195-residue stretch at 99-293 (KKILKYANIN…FAELLNSIVK (195 aa)) folds into the ATP-grasp domain. An ATP-binding site is contributed by 126-181 (IEKIGYPVFVKPNSGGSSVATNLVKDKEGIKEAVELALKYDKEVMIENYTKGEEIT). The Mg(2+) site is built by D248, E260, and N262.

This sequence belongs to the D-alanine--D-alanine ligase family. It depends on Mg(2+) as a cofactor. Requires Mn(2+) as cofactor.

It is found in the cytoplasm. It catalyses the reaction 2 D-alanine + ATP = D-alanyl-D-alanine + ADP + phosphate + H(+). It participates in cell wall biogenesis; peptidoglycan biosynthesis. Functionally, cell wall formation. This Clostridium botulinum (strain Langeland / NCTC 10281 / Type F) protein is D-alanine--D-alanine ligase.